The following is a 396-amino-acid chain: Stearoyl-[acyl-carrier-protein] 9-desaturase 5, chloroplastic (396 aa).

The N-terminal 29 residues, 1–29 (MAMAMDRIVFSPSSYVYRPCQARGSRSSR), are a transit peptide targeting the chloroplast. Fe cation is bound by residues Glu-137, Glu-175, His-178, Glu-228, Glu-261, and His-264.

Belongs to the fatty acid desaturase type 2 family. In terms of assembly, homodimer. It depends on Fe(2+) as a cofactor. Ubiquitously expressed with a preference in leaves, flowers and stems.

The protein resides in the plastid. The protein localises to the chloroplast stroma. It carries out the reaction octadecanoyl-[ACP] + 2 reduced [2Fe-2S]-[ferredoxin] + O2 + 2 H(+) = (9Z)-octadecenoyl-[ACP] + 2 oxidized [2Fe-2S]-[ferredoxin] + 2 H2O. It functions in the pathway lipid metabolism; fatty acid metabolism. Its function is as follows. Converts stearoyl-ACP to oleoyl-ACP by introduction of a cis double bond between carbons 9 and 10 of the acyl chain. The protein is Stearoyl-[acyl-carrier-protein] 9-desaturase 5, chloroplastic (S-ACP-DES5) of Arabidopsis thaliana (Mouse-ear cress).